The chain runs to 258 residues: Imidazole glycerol phosphate synthase subunit HisF (258 aa).

Residues Asp-11 and Asp-130 contribute to the active site.

It belongs to the HisA/HisF family. As to quaternary structure, heterodimer of HisH and HisF.

The protein resides in the cytoplasm. The enzyme catalyses 5-[(5-phospho-1-deoxy-D-ribulos-1-ylimino)methylamino]-1-(5-phospho-beta-D-ribosyl)imidazole-4-carboxamide + L-glutamine = D-erythro-1-(imidazol-4-yl)glycerol 3-phosphate + 5-amino-1-(5-phospho-beta-D-ribosyl)imidazole-4-carboxamide + L-glutamate + H(+). It participates in amino-acid biosynthesis; L-histidine biosynthesis; L-histidine from 5-phospho-alpha-D-ribose 1-diphosphate: step 5/9. Functionally, IGPS catalyzes the conversion of PRFAR and glutamine to IGP, AICAR and glutamate. The HisF subunit catalyzes the cyclization activity that produces IGP and AICAR from PRFAR using the ammonia provided by the HisH subunit. This Xanthomonas campestris pv. campestris (strain B100) protein is Imidazole glycerol phosphate synthase subunit HisF.